The sequence spans 383 residues: Queuine tRNA-ribosyltransferase (383 aa).

The active-site Proton acceptor is the Asp92. Substrate contacts are provided by residues 92 to 96 (DSGGF), Asp146, Gln190, and Gly217. The interval 248 to 254 (GVGKPED) is RNA binding. Asp267 functions as the Nucleophile in the catalytic mechanism. The interval 272–276 (TRNAR) is RNA binding; important for wobble base 34 recognition. Cys310, Cys312, Cys315, and His341 together coordinate Zn(2+).

Belongs to the queuine tRNA-ribosyltransferase family. In terms of assembly, homodimer. Within each dimer, one monomer is responsible for RNA recognition and catalysis, while the other monomer binds to the replacement base PreQ1. Requires Zn(2+) as cofactor.

The catalysed reaction is 7-aminomethyl-7-carbaguanine + guanosine(34) in tRNA = 7-aminomethyl-7-carbaguanosine(34) in tRNA + guanine. The protein operates within tRNA modification; tRNA-queuosine biosynthesis. Its function is as follows. Catalyzes the base-exchange of a guanine (G) residue with the queuine precursor 7-aminomethyl-7-deazaguanine (PreQ1) at position 34 (anticodon wobble position) in tRNAs with GU(N) anticodons (tRNA-Asp, -Asn, -His and -Tyr). Catalysis occurs through a double-displacement mechanism. The nucleophile active site attacks the C1' of nucleotide 34 to detach the guanine base from the RNA, forming a covalent enzyme-RNA intermediate. The proton acceptor active site deprotonates the incoming PreQ1, allowing a nucleophilic attack on the C1' of the ribose to form the product. After dissociation, two additional enzymatic reactions on the tRNA convert PreQ1 to queuine (Q), resulting in the hypermodified nucleoside queuosine (7-(((4,5-cis-dihydroxy-2-cyclopenten-1-yl)amino)methyl)-7-deazaguanosine). The chain is Queuine tRNA-ribosyltransferase from Psychrobacter sp. (strain PRwf-1).